The following is a 77-amino-acid chain: MSEYMKNEILEFLNRHNGGKTAEIAEALAVTDYQARYYLLLLEKAGMVQRSPLRRGMATYWFLKGEKQAGQSCSSTT.

This is P fimbrial regulatory protein KS71A (KS71A) from Escherichia coli.